A 326-amino-acid chain; its full sequence is WRKY transcription factor 8 (326 aa).

The tract at residues 115 to 172 (VRVSASPSSSEADHHPGEDSGKIRKKREVRDGGEDDQRSQKVVKTKKKEEKKKEPRVS) is disordered. Basic and acidic residues-rich tracts occupy residues 125-153 (EADHHPGEDSGKIRKKREVRDGGEDDQRS) and 161-170 (KKEEKKKEPR). The segment at residues 177-242 (TEVDHLEDGY…YESQHNHPIP (66 aa)) is a DNA-binding region (WRKY).

It belongs to the WRKY group II-c family. In terms of assembly, interacts with VQ9 (via N-terminus). As to expression, highly expressed in roots and at lower levels in rosette leaves, cauline leaves, stems, flowers and siliques.

It localises to the nucleus. Its function is as follows. Transcription factor. Interacts specifically with the W box (5'-TTGAC[CT]-3'), a frequently occurring stress-responsive cis-acting element. Functions as a positive regulator of salt stress response. Binds the W box of LTI78/RD29A stress-response gene and directly regulates its transcription under salt stress. Functions antagonistically with VQ9 to regulate sodium and potassium homeostasis under salt stress by regulating the expression of downstream SOS (SALT OVERLY SENSITIVE) stress-responsive genes. The DNA-binding activity of WRKY8 is decreased by VQ9. Functions as a negative regulator of basal resistance to the bacterial pathogen P.syringae and as positive regulator of resistance to the fungal pathogen to B.cinerea. Functions as a positive regulator of defense response againt tobamovirus (TMV) by regulating both the abscisic acid and ethylene signaling pathways. Positively regulates ABI4 expression and negatively modulates ACS6 and ERF104 expression by directly binding to the W box consensus motifs within their promoters. This chain is WRKY transcription factor 8 (WRKY8), found in Arabidopsis thaliana (Mouse-ear cress).